The sequence spans 523 residues: 2-isopropylmalate synthase (523 aa).

The region spanning 5 to 267 is the Pyruvate carboxyltransferase domain; that stretch reads VIIFDTTLRD…HTNINHHEIW (263 aa). Positions 14, 202, 204, and 238 each coordinate Mn(2+). Residues 392–523 form a regulatory domain region; that stretch reads RLDYFSVQSG…QNKENNKETV (132 aa).

Belongs to the alpha-IPM synthase/homocitrate synthase family. LeuA type 1 subfamily. Homodimer. Mn(2+) serves as cofactor.

Its subcellular location is the cytoplasm. The enzyme catalyses 3-methyl-2-oxobutanoate + acetyl-CoA + H2O = (2S)-2-isopropylmalate + CoA + H(+). Its pathway is amino-acid biosynthesis; L-leucine biosynthesis; L-leucine from 3-methyl-2-oxobutanoate: step 1/4. In terms of biological role, catalyzes the condensation of the acetyl group of acetyl-CoA with 3-methyl-2-oxobutanoate (2-ketoisovalerate) to form 3-carboxy-3-hydroxy-4-methylpentanoate (2-isopropylmalate). The chain is 2-isopropylmalate synthase from Salmonella typhi.